The following is a 138-amino-acid chain: Chorion protein S16 (138 aa).

The N-terminal stretch at 1–20 is a signal peptide; it reads MSATLRLLCLMACCVALAVA.

The protein belongs to the chorion protein S16 family.

The protein localises to the secreted. Chorion membrane (egg shell) protein; plays a role in protecting the egg from the environment. The protein is Chorion protein S16 (Cp16) of Drosophila melanogaster (Fruit fly).